A 239-amino-acid polypeptide reads, in one-letter code: Ribonuclease 3 (239 aa).

The region spanning 18–141 (YTTLEKALGY…LMAGVYLEAG (124 aa)) is the RNase III domain. E54 provides a ligand contact to Mg(2+). Residue D58 is part of the active site. Residues S127 and E130 each coordinate Mg(2+). E130 is an active-site residue. Residues 168 to 237 (DYKTALQELT…AYYALQKLKE (70 aa)) form the DRBM domain.

Belongs to the ribonuclease III family. Homodimer. Mg(2+) is required as a cofactor.

Its subcellular location is the cytoplasm. The catalysed reaction is Endonucleolytic cleavage to 5'-phosphomonoester.. Functionally, digests double-stranded RNA. Involved in the processing of primary rRNA transcript to yield the immediate precursors to the large and small rRNAs (23S and 16S). Processes some mRNAs, and tRNAs when they are encoded in the rRNA operon. Processes pre-crRNA and tracrRNA of type II CRISPR loci if present in the organism. This chain is Ribonuclease 3, found in Helicobacter pylori (strain G27).